A 330-amino-acid chain; its full sequence is MSTNRHQALGLTDQEAVDMYRTMLLARKIDERMWLLNRSGKIPFVISCQGQEAAQVGAAFALDREMDYVLPYYRDMGVVLAFGMTAKDLMMSGFAKAADPNSGGRQMPGHFGQKKNRIVTGSSPVTTQVPHAVGIALAGRMEKKDIAAFVTFGEGSSNQGDFHEGANFAAVHKLPVIFMCENNKYAISVPYDKQVACENISDRAIGYGMPGVTVNGNDPLEVYQAVKEARERARRGEGPTLIETISYRLTPHSSDDDDSSYRGREEVEEAKKSDPLLTYQAYLKETGLLSDEIEQTMLDEIMAIVNEATDEAENAPYAAPESALDYVYAK.

Residues F44, Y73, 107 to 110, and S123 each bind substrate; that span reads MPGH. 72–74 contributes to the thiamine diphosphate binding site; the sequence is YYR. Thiamine diphosphate is bound by residues 123-125, 153-159, 183-187, and H252; these read SPV, GEGSSNQ, and NKYAI. Residues E154, N183, and Y185 each coordinate Mg(2+). Positions 249 to 272 are disordered; the sequence is LTPHSSDDDDSSYRGREEVEEAKK. The span at 259–272 shows a compositional bias: basic and acidic residues; the sequence is SSYRGREEVEEAKK.

Belongs to the BCKDHA family. Heterotetramer of two alpha and two beta chains. Directly associated with ODBB in the E1 complex. Thiamine diphosphate serves as cofactor.

It carries out the reaction N(6)-[(R)-lipoyl]-L-lysyl-[protein] + 3-methyl-2-oxobutanoate + H(+) = N(6)-[(R)-S(8)-2-methylpropanoyldihydrolipoyl]-L-lysyl-[protein] + CO2. The branched-chain alpha-keto dehydrogenase complex catalyzes the overall conversion of alpha-keto acids to acyl-CoA and CO(2). It contains multiple copies of three enzymatic components: branched-chain alpha-keto acid decarboxylase (E1), lipoamide acyltransferase (E2) and lipoamide dehydrogenase (E3). This chain is 2-oxoisovalerate dehydrogenase subunit alpha (bfmBAA), found in Bacillus subtilis (strain 168).